Consider the following 354-residue polypeptide: 3-dehydroquinate synthase (354 aa).

NAD(+) is bound by residues 100 to 104, 124 to 125, lysine 136, lysine 145, and 163 to 166; these read GATGD, TT, and FLKT. Zn(2+)-binding residues include glutamate 178, histidine 242, and histidine 256.

This sequence belongs to the sugar phosphate cyclases superfamily. Dehydroquinate synthase family. NAD(+) serves as cofactor. Requires Co(2+) as cofactor. It depends on Zn(2+) as a cofactor.

It localises to the cytoplasm. It catalyses the reaction 7-phospho-2-dehydro-3-deoxy-D-arabino-heptonate = 3-dehydroquinate + phosphate. It participates in metabolic intermediate biosynthesis; chorismate biosynthesis; chorismate from D-erythrose 4-phosphate and phosphoenolpyruvate: step 2/7. Functionally, catalyzes the conversion of 3-deoxy-D-arabino-heptulosonate 7-phosphate (DAHP) to dehydroquinate (DHQ). This is 3-dehydroquinate synthase from Staphylococcus aureus (strain COL).